We begin with the raw amino-acid sequence, 283 residues long: uncharacterized protein (283 aa).

The interval 1–21 (MSAYTHPMERELSGLSSRGNS) is disordered. The helical transmembrane segment at 41 to 61 (SIFIASLVTFGVLMITLLIAL) threads the bilayer.

The protein belongs to the APS1/VSP family.

The protein localises to the membrane. This is an uncharacterized protein from Arabidopsis thaliana (Mouse-ear cress).